A 423-amino-acid polypeptide reads, in one-letter code: Glutamyl-tRNA reductase (423 aa).

Residues 51–54 (TCNR), Ser99, 104–106 (EDQ), and Gln110 contribute to the substrate site. Cys52 (nucleophile) is an active-site residue. 179–184 (GSGEMG) contributes to the NADP(+) binding site.

It belongs to the glutamyl-tRNA reductase family. As to quaternary structure, homodimer.

The catalysed reaction is (S)-4-amino-5-oxopentanoate + tRNA(Glu) + NADP(+) = L-glutamyl-tRNA(Glu) + NADPH + H(+). Its pathway is porphyrin-containing compound metabolism; protoporphyrin-IX biosynthesis; 5-aminolevulinate from L-glutamyl-tRNA(Glu): step 1/2. In terms of biological role, catalyzes the NADPH-dependent reduction of glutamyl-tRNA(Glu) to glutamate 1-semialdehyde (GSA). This Methanoculleus marisnigri (strain ATCC 35101 / DSM 1498 / JR1) protein is Glutamyl-tRNA reductase.